Reading from the N-terminus, the 477-residue chain is Trigger factor (477 aa).

Residues 169-254 (EDRVTIDYLG…VKEVAKPNEL (86 aa)) enclose the PPIase FKBP-type domain. A disordered region spans residues 435 to 477 (VSKEELTAEDEDAASEAKPAKKAAAKKKAAPKKKAEEGKSEEA). Residues 454–466 (AKKAAAKKKAAPK) show a composition bias toward basic residues. Residues 467-477 (KKAEEGKSEEA) are compositionally biased toward basic and acidic residues.

This sequence belongs to the FKBP-type PPIase family. Tig subfamily.

The protein localises to the cytoplasm. It catalyses the reaction [protein]-peptidylproline (omega=180) = [protein]-peptidylproline (omega=0). Involved in protein export. Acts as a chaperone by maintaining the newly synthesized protein in an open conformation. Functions as a peptidyl-prolyl cis-trans isomerase. This chain is Trigger factor, found in Brucella suis biovar 1 (strain 1330).